A 271-amino-acid polypeptide reads, in one-letter code: Probable esterase D14L (271 aa).

S96 functions as the Nucleophile in the catalytic mechanism. Active-site residues include D218 and H247.

Belongs to the AB hydrolase superfamily. As to quaternary structure, component of an intracellular receptor complex involved in the detection of the smoke compound karrikin. In terms of tissue distribution, expressed constitutively in all organs (e.g. roots, stems, leaves, panicles and embryos).

It is found in the nucleus. The protein localises to the cytoplasm. In terms of biological role, may be involved in strigolactone signaling pathway. Essential for plant responses to karrikins, a class of butenolide compounds, structurally similar to strigolactones, released from burning vegetation that stimulate seed germination and enhance seedling photomorphogenesis. Mediates a specific perception of karrikin. Required for the establishment of symbiosis with the arbuscular mycorrhizal fungi (AMF) Rhizophagus irregularis and Gigaspora rosea. Karrikin binding induces a conformational change. The chain is Probable esterase D14L (D14L) from Oryza sativa subsp. japonica (Rice).